Reading from the N-terminus, the 1245-residue chain is ATP-dependent helicase/deoxyribonuclease subunit B (1245 aa).

The tract at residues 737–758 is disordered; it reads WDDQNNAPTTDLPDRPNPRASE. Positions 748–758 are enriched in basic and acidic residues; the sequence is LPDRPNPRASE.

It belongs to the helicase family. AddB/RexB type 2 subfamily. In terms of assembly, heterodimer of AddA and RexB. Mg(2+) serves as cofactor.

Functionally, the heterodimer acts as both an ATP-dependent DNA helicase and an ATP-dependent, dual-direction single-stranded exonuclease. Recognizes the chi site generating a DNA molecule suitable for the initiation of homologous recombination. This subunit has 5' -&gt; 3' nuclease activity but not helicase activity. In Limosilactobacillus fermentum (strain NBRC 3956 / LMG 18251) (Lactobacillus fermentum), this protein is ATP-dependent helicase/deoxyribonuclease subunit B.